Here is a 173-residue protein sequence, read N- to C-terminus: uncharacterized protein (173 aa).

2 disordered regions span residues 1 to 23 (MGDL…GDVA) and 48 to 173 (TGAA…APQR). Low complexity predominate over residues 49–60 (GAAPGSAQAGPP). The segment covering 70-83 (PRGPQAPPRLPPSL) has biased composition (pro residues). A compositionally biased stretch (low complexity) spans 123–136 (PACAGSSAPGSPAA).

This is an uncharacterized protein from Homo sapiens (Human).